The following is a 269-amino-acid chain: 3-deoxy-manno-octulosonate cytidylyltransferase (269 aa).

Belongs to the KdsB family.

The protein resides in the cytoplasm. The enzyme catalyses 3-deoxy-alpha-D-manno-oct-2-ulosonate + CTP = CMP-3-deoxy-beta-D-manno-octulosonate + diphosphate. Its pathway is nucleotide-sugar biosynthesis; CMP-3-deoxy-D-manno-octulosonate biosynthesis; CMP-3-deoxy-D-manno-octulosonate from 3-deoxy-D-manno-octulosonate and CTP: step 1/1. The protein operates within bacterial outer membrane biogenesis; lipopolysaccharide biosynthesis. Activates KDO (a required 8-carbon sugar) for incorporation into bacterial lipopolysaccharide in Gram-negative bacteria. This Cupriavidus taiwanensis (strain DSM 17343 / BCRC 17206 / CCUG 44338 / CIP 107171 / LMG 19424 / R1) (Ralstonia taiwanensis (strain LMG 19424)) protein is 3-deoxy-manno-octulosonate cytidylyltransferase.